Here is a 456-residue protein sequence, read N- to C-terminus: uncharacterized protein (456 aa).

The region spanning 3 to 61 (LMRKNETREFLIEDIEFPAVGVAFYNDKKVYIKGAVPGQKVLARVSKVRREKIEAKLKE) is the TRAM domain. The [4Fe-4S] cluster site is built by C74, C80, C83, and C163. S-adenosyl-L-methionine-binding residues include Q289, Y318, E339, and D384. C411 functions as the Nucleophile in the catalytic mechanism.

It belongs to the class I-like SAM-binding methyltransferase superfamily. RNA M5U methyltransferase family.

This is an uncharacterized protein from Clostridium acetobutylicum (strain ATCC 824 / DSM 792 / JCM 1419 / IAM 19013 / LMG 5710 / NBRC 13948 / NRRL B-527 / VKM B-1787 / 2291 / W).